The following is a 352-amino-acid chain: MVFRIASSPYTHNQRQTSRIMLLVLLAAVPGIAAQLWFFGWGTLVQILLASVSALLAEALVLKLRKQSVAATLKDNSALLTGLLLAVSIPPLAPWWMVVLGTVFAVIIAKQLYGGLGQNPFNPAMIGYVVLLISFPVQMTSWLPPHEIAVNIPGFIDAIQVIFSGHTASGGDMNTLRLGIDGISQATPLDTFKTSVRAGHSVEQIMQYPIYSGILAGVGWQWVNLAWLAGGVWLLWQKAIRWHIPLSFLVTLALCATLGWLFSPETLAAPQIHLLSGATMLGAFFILTDPVTASTTNRGRLIFGALAGLLVWMIRSFGGYPDGVAFAVLLANITVPLIDYYTRPRVYGHRKG.

The next 5 membrane-spanning stretches (helical) occupy residues 20–40, 42–62, 78–109, 123–143, and 148–168; these read IMLL…WFFG, GTLV…ALVL, ALLT…VIIA, PAMI…TSWL, and IAVN…GHTA. Position 187 is an FMN phosphoryl threonine (Thr-187). A run of 5 helical transmembrane segments spans residues 214 to 234, 242 to 262, 267 to 287, 301 to 321, and 322 to 342; these read ILAG…GVWL, WHIP…GWLF, LAAP…FFIL, LIFG…GGYP, and DGVA…DYYT.

Belongs to the NqrB/RnfD family. As to quaternary structure, the complex is composed of six subunits: RsxA, RsxB, RsxC, RsxD, RsxE and RsxG. FMN serves as cofactor.

It is found in the cell inner membrane. In terms of biological role, part of a membrane-bound complex that couples electron transfer with translocation of ions across the membrane. Required to maintain the reduced state of SoxR. The polypeptide is Ion-translocating oxidoreductase complex subunit D (Escherichia coli O6:H1 (strain CFT073 / ATCC 700928 / UPEC)).